The following is a 247-amino-acid chain: Orotidine 5'-phosphate decarboxylase (247 aa).

Substrate is bound by residues Asp-16, Lys-38, 66-75 (DLKFHDIPNT), Thr-130, Arg-191, Gln-200, Gly-220, and Arg-221. The active-site Proton donor is the Lys-68.

It belongs to the OMP decarboxylase family. Type 1 subfamily. As to quaternary structure, homodimer.

The catalysed reaction is orotidine 5'-phosphate + H(+) = UMP + CO2. The protein operates within pyrimidine metabolism; UMP biosynthesis via de novo pathway; UMP from orotate: step 2/2. Functionally, catalyzes the decarboxylation of orotidine 5'-monophosphate (OMP) to uridine 5'-monophosphate (UMP). This chain is Orotidine 5'-phosphate decarboxylase, found in Rhodospirillum rubrum (strain ATCC 11170 / ATH 1.1.1 / DSM 467 / LMG 4362 / NCIMB 8255 / S1).